Reading from the N-terminus, the 654-residue chain is tRNA 5-methylaminomethyl-2-thiouridine biosynthesis bifunctional protein MnmC (654 aa).

Positions 1-235 (MSDFQHAQLD…KREMLGGTYQ (235 aa)) are tRNA (mnm(5)s(2)U34)-methyltransferase. An FAD-dependent cmnm(5)s(2)U34 oxidoreductase region spans residues 261–654 (VGGGLAGCAS…LRDLVRGQRG (394 aa)).

The protein in the N-terminal section; belongs to the methyltransferase superfamily. tRNA (mnm(5)s(2)U34)-methyltransferase family. In the C-terminal section; belongs to the DAO family. It depends on FAD as a cofactor.

The protein resides in the cytoplasm. The catalysed reaction is 5-aminomethyl-2-thiouridine(34) in tRNA + S-adenosyl-L-methionine = 5-methylaminomethyl-2-thiouridine(34) in tRNA + S-adenosyl-L-homocysteine + H(+). Its function is as follows. Catalyzes the last two steps in the biosynthesis of 5-methylaminomethyl-2-thiouridine (mnm(5)s(2)U) at the wobble position (U34) in tRNA. Catalyzes the FAD-dependent demodification of cmnm(5)s(2)U34 to nm(5)s(2)U34, followed by the transfer of a methyl group from S-adenosyl-L-methionine to nm(5)s(2)U34, to form mnm(5)s(2)U34. This Pseudomonas aeruginosa (strain UCBPP-PA14) protein is tRNA 5-methylaminomethyl-2-thiouridine biosynthesis bifunctional protein MnmC.